A 573-amino-acid chain; its full sequence is F-box/WD repeat-containing protein 5 (573 aa).

The region spanning 3–49 (EGGLPLLPDSLVYQIFLSLGPADVLAAGLVCRQWQAVSRDEFLWKEQ) is the F-box domain. The stretch at 90–129 (EHTDQVLHLSFSHSGYQFASCSKDCTVKIWNNDLTISLLH) is one WD 1 repeat. S151 bears the Phosphoserine; by PLK4 mark. The D-box motif lies at 308-316 (RRVFDSVLD). WD repeat units lie at residues 470-509 (TPND…CLAK) and 511-551 (RHED…RVLQ).

It belongs to the FBXW5 family. In terms of assembly, part of the SCF (SKP1-CUL1-F-box) E3 ubiquitin-protein ligase complex SCF(FBXW5) composed of CUL1, SKP1, RBX1 and FBXW5. Component of the DCX(FBXW5) E3 ubiquitin ligase complex, at least composed of (CUL4A or CUL4B), DDB1, FBXW5 and RBX1. Interacts with CDC20, TSC1, TSC2 and SASS6. Interacts with EPS8. Interacts with TNFAIP8L1; TNFAIP8L1 competes with TSC2 to bind FBXW5 increasing TSC2 stability by preventing its ubiquitination. Post-translationally, phosphorylated at Ser-151 by PLK4 during the G1/S transition, leading to inhibit its ability to ubiquitinate SASS6. Ubiquitinated and degraded by the APC/C complex during mitosis and G1 phase. As to expression, widely expressed in adult and embryonal tissues.

The protein localises to the cytoplasm. The protein operates within protein modification; protein ubiquitination. In terms of biological role, substrate recognition component of both SCF (SKP1-CUL1-F-box protein) and DCX (DDB1-CUL4-X-box) E3 ubiquitin-protein ligase complexes. Substrate-specific adapter of the DCX(FBXW5) E3 ubiquitin-protein ligase complex which mediates the polyubiquitination and subsequent degradation of TSC2. May also act as a negative regulator of MAP3K7/TAK1 signaling in the interleukin-1B (IL1B) signaling pathway. Substrate recognition component of the SCF(FBXW5) E3 ubiquitin-protein ligase complex which mediates the ubiquitination and subsequent proteasomal degradation of SASS6 during S phase, leading to prevent centriole reduplication. The SCF(FBXW5) complex also mediates ubiquitination and degradation of actin-regulator EPS8 during G2 phase, leading to the transient degradation of EPS8 and subsequent cell shape changes required to allow mitotic progression. The chain is F-box/WD repeat-containing protein 5 (Fbxw5) from Mus musculus (Mouse).